The sequence spans 249 residues: Gamma-glutamyl peptidase 3 (249 aa).

Positions 19–217 (SEFVKKTYGG…VDRVLNMKLM (199 aa)) constitute a Glutamine amidotransferase type-1 domain. The active-site Nucleophile is Cys-103. Residues His-196 and Glu-198 contribute to the active site.

The protein belongs to the peptidase C26 family.

It is found in the cytoplasm. It localises to the cytosol. It carries out the reaction an S-[(1E)-1-(hydroxyimino)-omega-(methylsulfanyl)alkyl]-L-glutathione + H2O = an S-[(1E)-1-(hydroxyimino)-omega-(methylsulfanyl)alkyl]-L-cysteinylglycine + L-glutamate. It catalyses the reaction (E)-1-(glutathione-S-yl)-2-(1H-indol-3-yl)acetohydroximate + H2O = (E)-1-(glycyl-L-cystein-S-yl)-2-(1H-indol-3-yl)acetohydroximate + L-glutamate. The catalysed reaction is 2-(glutathion-S-yl)-2-(1H-indol-3-yl)acetonitrile + H2O = 2-(glycyl-L-cystein-S-yl)-2-(1H-indol-3-yl)acetonitrile + L-glutamate. The enzyme catalyses (Z)-1-(glutathione-S-yl)-2-phenylacetohydroximate + H2O = (Z)-1-(glycyl-L-cystein-S-yl)-2-phenylacetohydroximate + L-glutamate. It functions in the pathway secondary metabolite biosynthesis. Its function is as follows. Involved in glucosinolate biosynthesis. Hydrolyzes the gamma-glutamyl peptide bond of several glutathione (GSH) conjugates to produce Cys-Gly conjugates related to glucosinolates. The gamma-Glu-Cys-Gly-GSH conjugates are the sulfur-donating molecule in glucosinolate biosynthesis. Can use the GSH conjugate of the camalexin intermediate IAN (GS-IAN) as substrate. Required for the biosynthesis of camalexin, a pathogen-inducible phytoalexin with antibacterial and antifungal properties. This chain is Gamma-glutamyl peptidase 3, found in Arabidopsis thaliana (Mouse-ear cress).